The primary structure comprises 250 residues: tRNA (guanine-N(1)-)-methyltransferase (250 aa).

S-adenosyl-L-methionine contacts are provided by residues G115 and 135 to 140 (LGDFVL).

It belongs to the RNA methyltransferase TrmD family. In terms of assembly, homodimer.

It localises to the cytoplasm. It catalyses the reaction guanosine(37) in tRNA + S-adenosyl-L-methionine = N(1)-methylguanosine(37) in tRNA + S-adenosyl-L-homocysteine + H(+). Specifically methylates guanosine-37 in various tRNAs. In Legionella pneumophila (strain Paris), this protein is tRNA (guanine-N(1)-)-methyltransferase.